The sequence spans 234 residues: Filarial antigen Av33 (234 aa).

An N-terminal signal peptide occupies residues 1–17 (MKILSCLLLCTITVLEG). A disulfide bond links C135 and C230. The disordered stretch occupies residues 204-234 (TSQASEATTIPTTTQTPVEAPETPSFCVPIY). Residues 211–220 (TTIPTTTQTP) are compositionally biased toward low complexity.

This sequence belongs to the protease inhibitor I33 family.

The protein resides in the secreted. In terms of biological role, aspartyl protease inhibitor. This is Filarial antigen Av33 from Acanthocheilonema viteae (Filarial nematode worm).